A 161-amino-acid polypeptide reads, in one-letter code: Crossover junction endodeoxyribonuclease RuvC (161 aa).

Residues Asp-7, Glu-67, and Asp-140 contribute to the active site. Mg(2+) contacts are provided by Asp-7, Glu-67, and Asp-140.

Belongs to the RuvC family. As to quaternary structure, homodimer which binds Holliday junction (HJ) DNA. The HJ becomes 2-fold symmetrical on binding to RuvC with unstacked arms; it has a different conformation from HJ DNA in complex with RuvA. In the full resolvosome a probable DNA-RuvA(4)-RuvB(12)-RuvC(2) complex forms which resolves the HJ. Requires Mg(2+) as cofactor.

The protein localises to the cytoplasm. It catalyses the reaction Endonucleolytic cleavage at a junction such as a reciprocal single-stranded crossover between two homologous DNA duplexes (Holliday junction).. The RuvA-RuvB-RuvC complex processes Holliday junction (HJ) DNA during genetic recombination and DNA repair. Endonuclease that resolves HJ intermediates. Cleaves cruciform DNA by making single-stranded nicks across the HJ at symmetrical positions within the homologous arms, yielding a 5'-phosphate and a 3'-hydroxyl group; requires a central core of homology in the junction. The consensus cleavage sequence is 5'-(A/T)TT(C/G)-3'. Cleavage occurs on the 3'-side of the TT dinucleotide at the point of strand exchange. HJ branch migration catalyzed by RuvA-RuvB allows RuvC to scan DNA until it finds its consensus sequence, where it cleaves and resolves the cruciform DNA. The protein is Crossover junction endodeoxyribonuclease RuvC of Natranaerobius thermophilus (strain ATCC BAA-1301 / DSM 18059 / JW/NM-WN-LF).